A 499-amino-acid chain; its full sequence is Probable alginate O-acetylase AlgI (499 aa).

11 consecutive transmembrane segments (helical) span residues 7-25 (VFLFLFLPLFLGLYYLSPA), 40-62 (YAWWRIDFLGLFAAVTVFNYWIG), 78-100 (WLTLGVVVDLCVLGYFKYANFGV), 115-137 (FVVTHILLPIGISFYVFESISYI), 150-172 (NLVDFAAFVAIFPHLIAGPVLRF), 239-261 (LYFDFSGYSDMAIGLGLMIGFRF), 312-334 (ILTMLLGGLWHGANWTFIIWGAW), 354-373 (IRPLRWVFAFLLVMVGWVIF), 380-397 (VAWRMYAAMFSFGDWTLS), 407-429 (LQIATLLLAYVVIAVYGIRQFYA), and 475-497 (VLLLFAASVLKLSAQSFSPFLYF). The active site involves H322.

The protein belongs to the membrane-bound acyltransferase family.

It localises to the cell inner membrane. Its pathway is glycan biosynthesis; alginate biosynthesis. Together with AlgJ and AlgF, forms an inner membrane complex which probably interacts with the alginate polymerization-transport complex and adds acetyl groups at the O-2 and O-3 positions of mannuronate residues. Acetylation of alginate increases cyst resistance to desiccation. This Azotobacter vinelandii protein is Probable alginate O-acetylase AlgI (algI).